Here is a 339-residue protein sequence, read N- to C-terminus: GTP 3',8-cyclase (339 aa).

A Radical SAM core domain is found at 13–249 (RYGRPLRDLR…GEVAQRHAFA (237 aa)). Arg22 contacts GTP. [4Fe-4S] cluster contacts are provided by Cys29 and Cys33. Tyr35 contributes to the S-adenosyl-L-methionine binding site. Residue Cys36 participates in [4Fe-4S] cluster binding. Arg75 is a GTP binding site. S-adenosyl-L-methionine is bound at residue Gly79. GTP is bound at residue Thr106. Ser130 is a binding site for S-adenosyl-L-methionine. GTP is bound at residue Lys168. An S-adenosyl-L-methionine-binding site is contributed by Met202. [4Fe-4S] cluster is bound by residues Cys266 and Cys269. Residue 271–273 (RAR) coordinates GTP. Residue Cys283 participates in [4Fe-4S] cluster binding.

The protein belongs to the radical SAM superfamily. MoaA family. Monomer and homodimer. [4Fe-4S] cluster is required as a cofactor.

The enzyme catalyses GTP + AH2 + S-adenosyl-L-methionine = (8S)-3',8-cyclo-7,8-dihydroguanosine 5'-triphosphate + 5'-deoxyadenosine + L-methionine + A + H(+). Its pathway is cofactor biosynthesis; molybdopterin biosynthesis. In terms of biological role, catalyzes the cyclization of GTP to (8S)-3',8-cyclo-7,8-dihydroguanosine 5'-triphosphate. This Xanthomonas campestris pv. campestris (strain 8004) protein is GTP 3',8-cyclase.